Consider the following 236-residue polypeptide: Cell division protein FtsQ (236 aa).

Topologically, residues 1-14 (MWDNHQALNQVADW) are cytoplasmic. A helical membrane pass occupies residues 15-37 (LFTLAGLTTIYLMVQWTIHLPLL). In terms of domain architecture, POTRA spans 37 to 111 (LPLKEVHIRS…NGLDVVVEEH (75 aa)). Residues 38–236 (PLKEVHIRSN…VSGFAARGTR (199 aa)) lie on the Periplasmic side of the membrane.

This sequence belongs to the FtsQ/DivIB family. FtsQ subfamily. Part of a complex composed of FtsB, FtsL and FtsQ.

The protein localises to the cell inner membrane. Its function is as follows. Essential cell division protein. May link together the upstream cell division proteins, which are predominantly cytoplasmic, with the downstream cell division proteins, which are predominantly periplasmic. May control correct divisome assembly. The chain is Cell division protein FtsQ from Nitrosospira multiformis (strain ATCC 25196 / NCIMB 11849 / C 71).